We begin with the raw amino-acid sequence, 644 residues long: Archaeal Lon protease (644 aa).

The span at M1–G18 shows a compositional bias: polar residues. A disordered region spans residues M1–S30. Residues M1–N137 lie on the Cytoplasmic side of the membrane. G71 to S78 contacts ATP. A run of 2 helical transmembrane segments spans residues L138 to N155 and Q156 to L171. The Cytoplasmic portion of the chain corresponds to Q172 to H644. The 180-residue stretch at G438–G617 folds into the Lon proteolytic domain. Residues S524 and K567 contribute to the active site.

Belongs to the peptidase S16 family. Archaeal LonB subfamily. As to quaternary structure, homohexamer. Organized in a ring with a central cavity.

Its subcellular location is the cell membrane. Functionally, ATP-dependent serine protease that mediates the selective degradation of mutant and abnormal proteins as well as certain short-lived regulatory proteins. Degrades polypeptides processively. This Methanothermobacter thermautotrophicus (strain ATCC 29096 / DSM 1053 / JCM 10044 / NBRC 100330 / Delta H) (Methanobacterium thermoautotrophicum) protein is Archaeal Lon protease.